Consider the following 269-residue polypeptide: Bidirectional sugar transporter SWEET1a (269 aa).

The Extracellular portion of the chain corresponds to 1 to 6; sequence MEHIAR. A helical membrane pass occupies residues 7–27; the sequence is FFFGVSGNVIALFLFLSPVVT. In terms of domain architecture, MtN3/slv 1 spans 8 to 96; sequence FFGVSGNVIA…IFLIFAVDRR (89 aa). Residues 28 to 42 are Cytoplasmic-facing; sequence FWRIIRKRSTEDFSG. Residues 43–63 traverse the membrane as a helical segment; the sequence is VPYNMTLLNCLLSAWYGLPFV. Topologically, residues 64–72 are extracellular; sequence SPNNILVST. The helical transmembrane segment at 73–93 threads the bilayer; sequence INGTGSVIEAIYVVIFLIFAV. The Cytoplasmic portion of the chain corresponds to 94–100; it reads DRRARLR. The chain crosses the membrane as a helical span at residues 101–121; sequence MLGLLSIVVSIFATVVLVSLL. The Extracellular segment spans residues 122-129; it reads ALHGNARK. The helical transmembrane segment at 130-150 threads the bilayer; the sequence is VFCGLAATIFSICMYASPLSI. Residues 132 to 215 form the MtN3/slv 2 domain; the sequence is CGLAATIFSI…ILYFIYRKNK (84 aa). The Cytoplasmic segment spans residues 151-164; it reads MRLVIKTKSVEYMP. Residues 165–185 form a helical membrane-spanning segment; sequence FLLSLAVFLCGTSWFIYGLLG. Topologically, residues 186 to 189 are extracellular; that stretch reads RDPF. Residues 190–210 traverse the membrane as a helical segment; it reads IIIPNGCGSFLGLVQLILYFI. The Cytoplasmic segment spans residues 211 to 269; it reads YRKNKGPAVPAGKGEAAAAADVEDAKKVAAAVEMADATTTNKAAADTVVGDGKVVASQV.

This sequence belongs to the SWEET sugar transporter family. As to quaternary structure, forms homooligomers and/or heterooligomers.

It localises to the cell membrane. Mediates both low-affinity uptake and efflux of sugar across the plasma membrane. The chain is Bidirectional sugar transporter SWEET1a from Sorghum bicolor (Sorghum).